We begin with the raw amino-acid sequence, 360 residues long: MELARNDQTEAALRGEANVWKSINGIADFMVMKCALELRIPDIVHSHSAPITLAQIASSVPDSPSLNLSYLSRIMRLLVRRKIFSQHKSLDGEEVLYGPTHSSRLLLSKTTLPDQVTLAPFVAFMTHPYLSAPWSCLARCVKEGGNGFEMVHGGRQLWDLSPGNPEFNKVFNDGMASTARITTMAILSEYRDVFCGICSLVDVGGEFGGSISAIVKSHPHIKGINYDLPHVVATAPTYTGLVSHVGGNMFEWIPTAVAVFMKWILHDWADEDCVKILKNCRRAMPEKGGKIIIVDIVLEPEGNGLFDDAAVMLDIALMALTRGKERTEKEWKRVLEEGGFPRYQILKIPALTSVIEAYPQ.

D227 contacts S-adenosyl-L-methionine. H266 serves as the catalytic Proton acceptor.

Belongs to the class I-like SAM-binding methyltransferase superfamily. Cation-independent O-methyltransferase family. In terms of assembly, homodimer. Highly expressed in lupulin glands. Detected in cones, male flowers and roots.

The protein localises to the cytoplasm. The catalysed reaction is xanthohumol + S-adenosyl-L-methionine = 4-O-methylxanthohumol + S-adenosyl-L-homocysteine + H(+). It carries out the reaction desmethylxanthohumol + S-adenosyl-L-methionine = xanthohumol + S-adenosyl-L-homocysteine + H(+). The enzyme catalyses isoliquiritigenin + S-adenosyl-L-methionine = 2'-O-methylisoliquiritigenin + S-adenosyl-L-homocysteine + H(+). It catalyses the reaction trans-resveratrol + S-adenosyl-L-methionine = 3-methoxy-4',5-dihydroxy-trans-stilbene + S-adenosyl-L-homocysteine + H(+). Its pathway is secondary metabolite biosynthesis. Inhibited by S-adenosyl homocysteine. In terms of biological role, involved in the biosynthesis of prenylated phenolics natural products which contribute to the bitter taste of beer and display broad biological activities. O-methyltransferase with a low substrate selectivity. Methylates chalconaringenin, desmethylxanthohumol, xanthohumol, isoliquiritigenin, butein, 2',4-dihydroxychalcone, resveratrol, genistein and guaiacol. Catalyzes the biosynthesis of 2',4'-dihydroxy-4,6'-dimethoxy-3'-prenylchalcone (4-O-methylxanthohumol). The protein is Xanthohumol 4-O-methyltransferase of Humulus lupulus (European hop).